The primary structure comprises 306 residues: Aspartate carbamoyltransferase catalytic subunit (306 aa).

Carbamoyl phosphate is bound by residues R55 and T56. Residue K85 coordinates L-aspartate. Residues R106, H133, and Q136 each coordinate carbamoyl phosphate. The L-aspartate site is built by R166 and R228. The carbamoyl phosphate site is built by L264 and P265.

The protein belongs to the aspartate/ornithine carbamoyltransferase superfamily. ATCase family. As to quaternary structure, heterododecamer (2C3:3R2) of six catalytic PyrB chains organized as two trimers (C3), and six regulatory PyrI chains organized as three dimers (R2).

It catalyses the reaction carbamoyl phosphate + L-aspartate = N-carbamoyl-L-aspartate + phosphate + H(+). The protein operates within pyrimidine metabolism; UMP biosynthesis via de novo pathway; (S)-dihydroorotate from bicarbonate: step 2/3. Its function is as follows. Catalyzes the condensation of carbamoyl phosphate and aspartate to form carbamoyl aspartate and inorganic phosphate, the committed step in the de novo pyrimidine nucleotide biosynthesis pathway. The chain is Aspartate carbamoyltransferase catalytic subunit from Serratia marcescens.